A 284-amino-acid polypeptide reads, in one-letter code: Tegument protein UL23 (284 aa).

Belongs to the herpesviridae US22 family. Interacts with host NMI; this interaction inhibits NMI interaction with STAT1.

It is found in the virion tegument. It localises to the host cytoplasm. Plays a role in the inhibition of host innate immune response by disrupting the interaction between NMI and STAT1. In turn, NMI-mediated transcription of interferon-gamma stimulated genes is inhibited. This Homo sapiens (Human) protein is Tegument protein UL23 (UL23).